The primary structure comprises 489 residues: Beta-glucosidase 14 (489 aa).

The first 21 residues, 1–21 (MTSKYFSVLVFIILASNEVVA), serve as a signal peptide directing secretion. Q49 contributes to the a beta-D-glucoside binding site. N80 is a glycosylation site (N-linked (GlcNAc...) asparagine). A beta-D-glucoside is bound by residues H153 and 198–199 (NE). E199 acts as the Proton donor in catalysis. C218 and C226 are joined by a disulfide. The N-linked (GlcNAc...) asparagine glycan is linked to N225. An a beta-D-glucoside-binding site is contributed by Y343. Residue N357 is glycosylated (N-linked (GlcNAc...) asparagine). A beta-D-glucoside-binding positions include E396, W441, 448 to 449 (EW), and F457. Catalysis depends on E396, which acts as the Nucleophile.

It belongs to the glycosyl hydrolase 1 family.

It catalyses the reaction Hydrolysis of terminal, non-reducing beta-D-glucosyl residues with release of beta-D-glucose.. The polypeptide is Beta-glucosidase 14 (Arabidopsis thaliana (Mouse-ear cress)).